The chain runs to 147 residues: Lipoprotein YfjS (147 aa).

A signal peptide spans 1 to 20 (MKRKTLPLLALVATSLFLSA). Cys21 is lipidated: N-palmitoyl cysteine. Cys21 carries S-diacylglycerol cysteine lipidation.

The protein to E.coli YafY.

Its subcellular location is the cell inner membrane. Functionally, does not induce degP when overexpressed unless it is mutated to resemble YafY. This Escherichia coli (strain K12) protein is Lipoprotein YfjS (yfjS).